Consider the following 70-residue polypeptide: DNA-directed RNA polymerase subunit epsilon (70 aa).

This sequence belongs to the RNA polymerase subunit epsilon family. As to quaternary structure, RNAP is composed of a core of 2 alpha, a beta and a beta' subunit. The core is associated with a delta subunit, and at least one of epsilon or omega. When a sigma factor is associated with the core the holoenzyme is formed, which can initiate transcription.

It catalyses the reaction RNA(n) + a ribonucleoside 5'-triphosphate = RNA(n+1) + diphosphate. Functionally, a non-essential component of RNA polymerase (RNAP). This chain is DNA-directed RNA polymerase subunit epsilon, found in Bacillus cereus (strain Q1).